A 227-amino-acid chain; its full sequence is uncharacterized protein (227 aa).

An AMMECR1 domain is found at 5-220 (TSSPYAFYAF…IAWDEFETGL (216 aa)).

This is an uncharacterized protein from Kluyveromyces lactis (strain ATCC 8585 / CBS 2359 / DSM 70799 / NBRC 1267 / NRRL Y-1140 / WM37) (Yeast).